A 741-amino-acid chain; its full sequence is MRISSLLFLTFLAGIVQAQDFLAMFKPFLGGGGGGGNPFANPQAIGGLFQQFAGGNGGGFGQLLAGAMAPKPAPAAAGPRSAPAPTNEDYNTDIDVPAPKAKARAAPTPRRAQADAPPVYRQPRTKAEKIERFRNIARTFSPFVYEVNTTPAPHFDNFIWQQNAPAVTPEPFTFAPFSFPTLATVAPPAPGPGGPTLEPFLPTTASPKLLAHNTARMIREIASFSDGGRSRDQDFGAVQTLMQAFFEAVSSGNNGGAGAAAGAGTALGDAPMLQAHRDGTELGANRALTNKLFESDMVLTVKQMKAIVLAAQEARNPHGRKKRKVITGSVYRWKSVIPFRFKGGDAKWKKLIREGLGLWEKETCVRWSENGPGKDYVIFFRGSGCYSSVGRTGGSQLISIGYGCEDKGIVAHEVGHSLGFWHEQSRPDRDDYIHLRKDWIIKGTDGNFEKRSWEEIEDMGVPYDVGSVMHYGSNAFTKDWDQITIETKDSRYQGTIGQRQKLSFIDVKQVNRLYCNSVCPVALPCMHGGYPDPNNCAVCKCPDGLGGKLCGRAAKGTDHDKCGGELTATAEWQEMVYKGKRTCNWKVKSPSGGRVRLVLTELRYQCAPACKAYIEIKHNTDFQQTGFRVCCFNKTYDVISDQSEALILSNANIVDYEVSYKLQWIQDNGKALPPPKPTSTWVPGKENRPFRGVENSGGTIEKFILQAIPKIRDSHRPLESITSIVAEYGLATLLGISHNGK.

2 stretches are compositionally biased toward low complexity: residues 71–85 and 97–118; these read KPAPAAAGPRSAPAP and PAPKAKARAAPTPRRAQADAPP. The interval 71-122 is disordered; that stretch reads KPAPAAAGPRSAPAPTNEDYNTDIDVPAPKAKARAAPTPRRAQADAPPVYRQ. The 193-residue stretch at 324 to 516 folds into the Peptidase M12A domain; that stretch reads KVITGSVYRW…VKQVNRLYCN (193 aa). Disulfide bonds link cysteine 364-cysteine 515, cysteine 385-cysteine 404, cysteine 519-cysteine 539, cysteine 541-cysteine 550, cysteine 562-cysteine 583, and cysteine 610-cysteine 630. Histidine 412 provides a ligand contact to Zn(2+). Glutamate 413 is an active-site residue. Zn(2+)-binding residues include histidine 416 and histidine 422. The EGF-like domain maps to 539–550; it reads CKCPDGLGGKLC. Residues 550 to 648 form the CUB domain; that stretch reads CGRAAKGTDH…ISDQSEALIL (99 aa). The N-linked (GlcNAc...) asparagine glycan is linked to asparagine 633.

Requires Zn(2+) as cofactor.

Functionally, metalloprotease. This is Zinc metalloproteinase nas-30 from Caenorhabditis elegans.